Here is a 409-residue protein sequence, read N- to C-terminus: NADH-quinone oxidoreductase subunit D 1 (409 aa).

Belongs to the complex I 49 kDa subunit family. As to quaternary structure, NDH-1 is composed of 14 different subunits. Subunits NuoB, C, D, E, F, and G constitute the peripheral sector of the complex.

The protein localises to the cell inner membrane. The catalysed reaction is a quinone + NADH + 5 H(+)(in) = a quinol + NAD(+) + 4 H(+)(out). In terms of biological role, NDH-1 shuttles electrons from NADH, via FMN and iron-sulfur (Fe-S) centers, to quinones in the respiratory chain. The immediate electron acceptor for the enzyme in this species is believed to be ubiquinone. Couples the redox reaction to proton translocation (for every two electrons transferred, four hydrogen ions are translocated across the cytoplasmic membrane), and thus conserves the redox energy in a proton gradient. This Solibacter usitatus (strain Ellin6076) protein is NADH-quinone oxidoreductase subunit D 1.